The following is a 100-amino-acid chain: Apolipoprotein C-II (100 aa).

The first 22 residues, 1–22 (MGSRFLLALFLVLLVLGYEVQG), serve as a signal peptide directing secretion. Residues 66 to 74 (SVDEKLRDM) form a lipid binding region. The lipoprotein lipase cofactor stretch occupies residues 78–100 (SSAAVSTYAGIFTDQILTLLKGE).

The protein belongs to the apolipoprotein C2 family. In terms of processing, proapolipoprotein C-II is synthesized as a sialic acid containing glycoprotein which is subsequently desialylated prior to its proteolytic processing. Proapolipoprotein C-II, the major form found in plasma undergoes proteolytic cleavage of its N-terminal hexapeptide to generate the mature form apolipoprotein C-II, which occurs as the minor form in plasma.

It is found in the secreted. Its function is as follows. Component of chylomicrons, very low-density lipoproteins (VLDL), low-density lipoproteins (LDL), and high-density lipoproteins (HDL) in plasma. Plays an important role in lipoprotein metabolism as an activator of lipoprotein lipase. The sequence is that of Apolipoprotein C-II (Apoc2) from Neotoma lepida (Desert woodrat).